We begin with the raw amino-acid sequence, 679 residues long: Methionine--tRNA ligase (679 aa).

A 'HIGH' region motif is present at residues 15–25 (PYANGPIHLGH). Zn(2+) contacts are provided by Cys146, Cys149, Cys159, and Cys162. Residues 332–336 (KMSKS) carry the 'KMSKS' region motif. Lys335 contributes to the ATP binding site. The 102-residue stretch at 578–679 (DFAKIDLRIA…EGAQPGMKVK (102 aa)) folds into the tRNA-binding domain.

It belongs to the class-I aminoacyl-tRNA synthetase family. MetG type 1 subfamily. As to quaternary structure, homodimer. Zn(2+) is required as a cofactor.

The protein resides in the cytoplasm. It catalyses the reaction tRNA(Met) + L-methionine + ATP = L-methionyl-tRNA(Met) + AMP + diphosphate. In terms of biological role, is required not only for elongation of protein synthesis but also for the initiation of all mRNA translation through initiator tRNA(fMet) aminoacylation. The sequence is that of Methionine--tRNA ligase from Shewanella halifaxensis (strain HAW-EB4).